A 192-amino-acid polypeptide reads, in one-letter code: UPF0149 protein KPN78578_32810 (192 aa).

This sequence belongs to the UPF0149 family.

The sequence is that of UPF0149 protein KPN78578_32810 from Klebsiella pneumoniae subsp. pneumoniae (strain ATCC 700721 / MGH 78578).